Consider the following 236-residue polypeptide: 5'-methylthioadenosine/S-adenosylhomocysteine nucleosidase (236 aa).

Glu-12 acts as the Proton acceptor in catalysis. Substrate-binding positions include Gly-78, Ile-153, and 174-175 (ME). Asp-198 acts as the Proton donor in catalysis.

This sequence belongs to the PNP/UDP phosphorylase family. MtnN subfamily.

The enzyme catalyses S-adenosyl-L-homocysteine + H2O = S-(5-deoxy-D-ribos-5-yl)-L-homocysteine + adenine. It carries out the reaction S-methyl-5'-thioadenosine + H2O = 5-(methylsulfanyl)-D-ribose + adenine. It catalyses the reaction 5'-deoxyadenosine + H2O = 5-deoxy-D-ribose + adenine. The protein operates within amino-acid biosynthesis; L-methionine biosynthesis via salvage pathway; S-methyl-5-thio-alpha-D-ribose 1-phosphate from S-methyl-5'-thioadenosine (hydrolase route): step 1/2. Its function is as follows. Catalyzes the irreversible cleavage of the glycosidic bond in both 5'-methylthioadenosine (MTA) and S-adenosylhomocysteine (SAH/AdoHcy) to adenine and the corresponding thioribose, 5'-methylthioribose and S-ribosylhomocysteine, respectively. Also cleaves 5'-deoxyadenosine, a toxic by-product of radical S-adenosylmethionine (SAM) enzymes, into 5-deoxyribose and adenine. This chain is 5'-methylthioadenosine/S-adenosylhomocysteine nucleosidase, found in Shewanella baltica (strain OS223).